A 449-amino-acid chain; its full sequence is UDP-N-acetylmuramoylalanine--D-glutamate ligase (449 aa).

118–124 (GTNGKTT) is a binding site for ATP.

Belongs to the MurCDEF family.

The protein localises to the cytoplasm. It catalyses the reaction UDP-N-acetyl-alpha-D-muramoyl-L-alanine + D-glutamate + ATP = UDP-N-acetyl-alpha-D-muramoyl-L-alanyl-D-glutamate + ADP + phosphate + H(+). Its pathway is cell wall biogenesis; peptidoglycan biosynthesis. Cell wall formation. Catalyzes the addition of glutamate to the nucleotide precursor UDP-N-acetylmuramoyl-L-alanine (UMA). The polypeptide is UDP-N-acetylmuramoylalanine--D-glutamate ligase (Staphylococcus epidermidis (strain ATCC 35984 / DSM 28319 / BCRC 17069 / CCUG 31568 / BM 3577 / RP62A)).